The primary structure comprises 327 residues: Undecaprenyl-phosphate 4-deoxy-4-formamido-L-arabinose transferase (327 aa).

Topologically, residues 1-235 (MFDAAPIKKV…TCLTTTPLRL (235 aa)) are cytoplasmic. The helical transmembrane segment at 236–256 (LSLLGSVIAIGGFSLSVLLIV) threads the bilayer. The Periplasmic portion of the chain corresponds to 257–269 (LRLALGPQWAAEG). A helical transmembrane segment spans residues 270 to 290 (VFMLFAVLFTFIGAQFIGMGL). The Cytoplasmic segment spans residues 291 to 327 (LGEYIGRIYNDVRARPRYFVQQVIYPESTSFTEESHQ).

Belongs to the glycosyltransferase 2 family.

It is found in the cell inner membrane. It carries out the reaction UDP-4-deoxy-4-formamido-beta-L-arabinose + di-trans,octa-cis-undecaprenyl phosphate = 4-deoxy-4-formamido-alpha-L-arabinopyranosyl di-trans,octa-cis-undecaprenyl phosphate + UDP. The protein operates within glycolipid biosynthesis; 4-amino-4-deoxy-alpha-L-arabinose undecaprenyl phosphate biosynthesis; 4-amino-4-deoxy-alpha-L-arabinose undecaprenyl phosphate from UDP-4-deoxy-4-formamido-beta-L-arabinose and undecaprenyl phosphate: step 1/2. Its pathway is bacterial outer membrane biogenesis; lipopolysaccharide biosynthesis. Functionally, catalyzes the transfer of 4-deoxy-4-formamido-L-arabinose from UDP to undecaprenyl phosphate. The modified arabinose is attached to lipid A and is required for resistance to polymyxin and cationic antimicrobial peptides. In Salmonella newport (strain SL254), this protein is Undecaprenyl-phosphate 4-deoxy-4-formamido-L-arabinose transferase.